The following is a 237-amino-acid chain: MALPPSPLAMEYVNDFDLMKFEVKREPSEGRPGPPTASLGSTPYSSVPPSPTFSEPGMVGATEGTRPGLEELYWLATLQQQLGAGEALGLSPEEAMELLQGQGPVPVDGPHGYYPGSPEETGAQHVQLAERFSDAALVSMSVRELNRQLRGCGRDEALRLKQRRRTLKNRGYAQACRSKRLQQRRGLEAERARLAAQLDALRAEVARLARERDLYKARCDRLTSSGPGSGDPSHLFL.

Residues K20 and K24 each participate in a glycyl lysine isopeptide (Lys-Gly) (interchain with G-Cter in SUMO) cross-link. The tract at residues 23 to 57 (VKREPSEGRPGPPTASLGSTPYSSVPPSPTFSEPG) is disordered. A minimal transactivation domain (MTD) region spans residues 30-93 (GRPGPPTASL…AGEALGLSPE (64 aa)). The interval 159–185 (RLKQRRRTLKNRGYAQACRSKRLQQRR) is basic motif. Residues 159–222 (RLKQRRRTLK…DLYKARCDRL (64 aa)) enclose the bZIP domain. The interval 187–208 (LEAERARLAAQLDALRAEVARL) is leucine-zipper.

The protein belongs to the bZIP family. As to quaternary structure, interacts with FIZ1; this interaction represses transactivation. Interacts (via the leucine-zipper domain) with CRX. In terms of processing, phosphorylated. Post-translationally, disumoylated at Lys-20. Sumoylation modulates the transcriptional activity of NRL on RHO and NR2E3 promoters, and is required for normal rod differentiation. Expressed in the brain and the retina. Expressed strongly in rod and cone cells (at protein level).

The protein resides in the cytoplasm. Its subcellular location is the nucleus. Its function is as follows. Acts as a transcriptional activator which regulates the expression of several rod-specific genes, including RHO and PDE6B. Also functions as a transcriptional coactivator, stimulating transcription mediated by the transcription factor CRX and NR2E3. Binds to the rhodopsin promoter in a sequence-specific manner. The sequence is that of Neural retina-specific leucine zipper protein (NRL) from Homo sapiens (Human).